The sequence spans 341 residues: Ferredoxin--NADP reductase 2 (341 aa).

FAD contacts are provided by Asp-42, Gln-50, Tyr-55, Ile-95, Phe-129, Asp-294, and Ser-335.

Belongs to the ferredoxin--NADP reductase type 2 family. In terms of assembly, homodimer. The cofactor is FAD.

It catalyses the reaction 2 reduced [2Fe-2S]-[ferredoxin] + NADP(+) + H(+) = 2 oxidized [2Fe-2S]-[ferredoxin] + NADPH. The chain is Ferredoxin--NADP reductase 2 from Chloroherpeton thalassium (strain ATCC 35110 / GB-78).